The sequence spans 295 residues: 4-hydroxy-tetrahydrodipicolinate synthase (295 aa).

A pyruvate-binding site is contributed by threonine 46. The active-site Proton donor/acceptor is tyrosine 134. Lysine 162 (schiff-base intermediate with substrate) is an active-site residue. Isoleucine 205 lines the pyruvate pocket.

Belongs to the DapA family. As to quaternary structure, homotetramer; dimer of dimers.

The protein localises to the cytoplasm. It catalyses the reaction L-aspartate 4-semialdehyde + pyruvate = (2S,4S)-4-hydroxy-2,3,4,5-tetrahydrodipicolinate + H2O + H(+). The protein operates within amino-acid biosynthesis; L-lysine biosynthesis via DAP pathway; (S)-tetrahydrodipicolinate from L-aspartate: step 3/4. Its function is as follows. Catalyzes the condensation of (S)-aspartate-beta-semialdehyde [(S)-ASA] and pyruvate to 4-hydroxy-tetrahydrodipicolinate (HTPA). The chain is 4-hydroxy-tetrahydrodipicolinate synthase from Anaeromyxobacter sp. (strain K).